The chain runs to 299 residues: ATP phosphoribosyltransferase (299 aa).

It belongs to the ATP phosphoribosyltransferase family. Long subfamily. Equilibrium between an active dimeric form, an inactive hexameric form and higher aggregates. Interconversion between the various forms is largely reversible and is influenced by the natural substrates and inhibitors of the enzyme. Mg(2+) serves as cofactor.

It is found in the cytoplasm. It carries out the reaction 1-(5-phospho-beta-D-ribosyl)-ATP + diphosphate = 5-phospho-alpha-D-ribose 1-diphosphate + ATP. The protein operates within amino-acid biosynthesis; L-histidine biosynthesis; L-histidine from 5-phospho-alpha-D-ribose 1-diphosphate: step 1/9. Feedback inhibited by histidine. In terms of biological role, catalyzes the condensation of ATP and 5-phosphoribose 1-diphosphate to form N'-(5'-phosphoribosyl)-ATP (PR-ATP). Has a crucial role in the pathway because the rate of histidine biosynthesis seems to be controlled primarily by regulation of HisG enzymatic activity. This Salmonella enteritidis PT4 (strain P125109) protein is ATP phosphoribosyltransferase.